We begin with the raw amino-acid sequence, 326 residues long: ATPase GET3 (326 aa).

32-39 serves as a coordination point for ATP; the sequence is KGGVGKTT. D61 is an active-site residue. ATP is bound by residues E244 and N271. Zn(2+) contacts are provided by C282 and C285.

Belongs to the arsA ATPase family. Homodimer.

The protein resides in the cytoplasm. It is found in the endoplasmic reticulum. Functionally, ATPase required for the post-translational delivery of tail-anchored (TA) proteins to the endoplasmic reticulum. Recognizes and selectively binds the transmembrane domain of TA proteins in the cytosol. This complex then targets to the endoplasmic reticulum by membrane-bound receptors, where the tail-anchored protein is released for insertion. This process is regulated by ATP binding and hydrolysis. ATP binding drives the homodimer towards the closed dimer state, facilitating recognition of newly synthesized TA membrane proteins. ATP hydrolysis is required for insertion. Subsequently, the homodimer reverts towards the open dimer state, lowering its affinity for the membrane-bound receptor, and returning it to the cytosol to initiate a new round of targeting. The chain is ATPase GET3 from Phaeosphaeria nodorum (strain SN15 / ATCC MYA-4574 / FGSC 10173) (Glume blotch fungus).